The primary structure comprises 334 residues: Probable allantoicase (334 aa).

This sequence belongs to the allantoicase family.

The enzyme catalyses allantoate + H2O = (S)-ureidoglycolate + urea. It participates in nitrogen metabolism; (S)-allantoin degradation; (S)-ureidoglycolate from allantoate (aminidohydrolase route): step 1/1. This Acinetobacter baylyi (strain ATCC 33305 / BD413 / ADP1) protein is Probable allantoicase.